Consider the following 568-residue polypeptide: MKFSKMFIPTTKETPNDATLPSHQYLVRGGFIAQTGAGIYDFMPLGKIVLEKIRAIVKEEMDEAGANEVQFGFVTPLTLWQESGRATTMGAEMLRFKDRKNGEFVLSPTNEEAVVNMVKNRITSYKDLPLHLYQINTKFRDEARPRFGLMRGREFLMKDGYSFHSSEEDLVREFNLMETTYKKIYTKLGLDFRVVAADSGAIGGSGSKEFHVIADSGEDTLVVCDSCDYGANIEAAIRKPKTYSFERKSDSKKIHTPNTKTIEEVANFLNISKEQTIKAVIKKAIYEEKTQIVIFFVRGSDELEETKACNAVNALELIDASEDDIKEAGLVAGYCGLFNLPSNINFIIDLELKDEIGLACGANEEDYHLVNTDLSTLKDVKYYDLIAVQEGDICACCGGKLSYTKGIEAGHIFQLGTKYSSAMNANFLDENGKAKPFIMGCYGIGVSRLVAAVIEQNHDDKGCIWTKATAPFMVDIIVSNSKKEEEAKVGEELYSKLKQAGISTILDDRINARFGFKMSDFELLGFPYAVVIGKKLEDGLVEIVDRKTLEKIDVKVDEVISKILELVK.

This sequence belongs to the class-II aminoacyl-tRNA synthetase family. ProS type 1 subfamily. As to quaternary structure, homodimer.

It is found in the cytoplasm. It catalyses the reaction tRNA(Pro) + L-proline + ATP = L-prolyl-tRNA(Pro) + AMP + diphosphate. Catalyzes the attachment of proline to tRNA(Pro) in a two-step reaction: proline is first activated by ATP to form Pro-AMP and then transferred to the acceptor end of tRNA(Pro). As ProRS can inadvertently accommodate and process non-cognate amino acids such as alanine and cysteine, to avoid such errors it has two additional distinct editing activities against alanine. One activity is designated as 'pretransfer' editing and involves the tRNA(Pro)-independent hydrolysis of activated Ala-AMP. The other activity is designated 'posttransfer' editing and involves deacylation of mischarged Ala-tRNA(Pro). The misacylated Cys-tRNA(Pro) is not edited by ProRS. The sequence is that of Proline--tRNA ligase from Aliarcobacter butzleri (strain RM4018) (Arcobacter butzleri).